Here is a 281-residue protein sequence, read N- to C-terminus: Gas vesicle protein L1 (281 aa).

This sequence belongs to the gas vesicle GvpF/GvpL family. May form oligomers. GvpF to GvpM interact with each other in vitro, and may form multi-subunit complex(es). Interacts with GvpC1, GvpN1 and GvpO1.

It localises to the gas vesicle. Its subcellular location is the cytoplasm. Functionally, proteins GvpF to GvpM might be involved in nucleating gas vesicle formation. A minor component of the gas vesicle. This the only minor gas vesicle protein that binds all the others (including GvpC1, GvpN1 and GvpO1, but not GvpA1), suggesting it might be able to assemble them. Gas vesicles are hollow, gas filled proteinaceous nanostructures found in several microbial planktonic microorganisms. They allow positioning of halobacteria at the optimal depth for growth in the poorly aerated, shallow brine pools of their habitat. Expression of a 9.5 kb p-vac DNA fragment containing 2 divergently transcribed regions (gvpD-gvpE-gvpF-gvpG-gvpH-gvpI-gvpJ-gvpK-gvpL-gvpM and gvpA-gvpC-gvpN-gvpO) allows H.volcanii to produce gas vesicles. A minimal gas vesicle can be made in H.volcanii by gvpA1-gvpO1 plus gvpF1-gvpG1-gvpJ1-gvpK1-gvpL1-gvpM1; lack of enough GvpJ1 prevents their formation. A similar region restores gas vesicle production in H.halobium without the p-vac locus, but it still has the c-vac locus. This is Gas vesicle protein L1 (gvpL11) from Halobacterium salinarum (strain ATCC 700922 / JCM 11081 / NRC-1) (Halobacterium halobium).